The primary structure comprises 197 residues: Isochorismatase domain-containing protein 2 (197 aa).

The protein belongs to the isochorismatase family.

In Danio rerio (Zebrafish), this protein is Isochorismatase domain-containing protein 2 (isoc2).